The sequence spans 104 residues: Large ribosomal subunit protein uL24 (104 aa).

Belongs to the universal ribosomal protein uL24 family. Part of the 50S ribosomal subunit.

Its function is as follows. One of two assembly initiator proteins, it binds directly to the 5'-end of the 23S rRNA, where it nucleates assembly of the 50S subunit. Functionally, one of the proteins that surrounds the polypeptide exit tunnel on the outside of the subunit. This Rhodopseudomonas palustris (strain BisB18) protein is Large ribosomal subunit protein uL24.